Here is a 23-residue protein sequence, read N- to C-terminus: Hongotoxin-4 (23 aa).

It belongs to the short scorpion toxin superfamily. Potassium channel inhibitor family. Alpha-KTx 02 subfamily. Expressed by the venom gland.

The protein localises to the secreted. Potent selective inhibitor of Kv1/KCNA voltage-gated potassium channels. The sequence is that of Hongotoxin-4 from Centruroides limbatus (Bark scorpion).